A 372-amino-acid chain; its full sequence is 3-galactosyl-N-acetylglucosaminide 4-alpha-L-fucosyltransferase FUT3 (372 aa).

Residues 1-15 (MDPLGAAKPQWPWRR) lie on the Cytoplasmic side of the membrane. Residues 16–34 (CLAALLFQLLVAVCFFSYL) form a helical; Signal-anchor for type II membrane protein membrane-spanning segment. At 35–372 (RVSRDDATGS…TMRSIAAWFT (338 aa)) the chain is on the lumenal side. The tract at residues 40-69 (DATGSPRPGLMAVEPVTGAPSGSSRQDTTP) is disordered. 2 N-linked (GlcNAc...) asparagine glycosylation sites follow: Asn165 and Asn196.

This sequence belongs to the glycosyltransferase 10 family. Post-translationally, glycosylated.

It is found in the golgi apparatus. The protein resides in the golgi stack membrane. The catalysed reaction is a beta-D-galactosyl-(1-&gt;3)-N-acetyl-beta-D-glucosaminyl derivative + GDP-beta-L-fucose = a beta-D-galactosyl-(1-&gt;3)-[alpha-L-fucosyl-(1-&gt;4)]-N-acetyl-beta-D-glucosaminyl derivative + GDP + H(+). It carries out the reaction an N-acetyl-alpha-neuraminyl-(2-&gt;3)-beta-D-galactosyl-(1-&gt;4)-N-acetyl-beta-D-glucosaminyl derivative + GDP-beta-L-fucose = an alpha-Neu5Ac-(2-&gt;3)-beta-D-Gal-(1-&gt;4)-[alpha-L-Fuc-(1-&gt;3)]-beta-D-GlcNAc derivative + GDP + H(+). It catalyses the reaction a beta-D-galactosyl-(1-&gt;4)-N-acetyl-beta-D-glucosaminyl derivative + GDP-beta-L-fucose = a beta-D-galactosyl-(1-&gt;4)-[alpha-L-fucosyl-(1-&gt;3)]-N-acetyl-beta-D-glucosaminyl derivative + GDP + H(+). The enzyme catalyses an alpha-Neu5Ac-(2-&gt;3)-beta-D-Gal-(1-&gt;4)-beta-D-GlcNAc-(1-&gt;3)-beta-D-Gal-(1-&gt;4)-[alpha-L-Fuc-(1-&gt;3)]-beta-D-GlcNAc derivative + GDP-beta-L-fucose = an alpha-Neu5Ac-(2-&gt;3)-beta-D-Gal-(1-&gt;4)-[alpha-L-Fuc-(1-&gt;3)]-beta-D-GlcNAc-(1-&gt;3)-beta-D-Gal-(1-&gt;4)-[alpha-L-Fuc-(1-&gt;3)]-beta-D-GlcNAc derivative + GDP + H(+). The catalysed reaction is Lc4Cer + GDP-beta-L-fucose = a lactoside III(4)-a-Fuc-Lc4Cer + GDP + H(+). It carries out the reaction a beta-D-Gal-(1-&gt;3)-beta-D-GlcNAc-(1-&gt;3)-beta-D-Gal-(1-&gt;4)-beta-D-Glc-(1&lt;-&gt;1')-Cer(d18:1(4E)) + GDP-beta-L-fucose = a III(4)-a-Fuc-Lc4Cer(d18:1(4E)) + GDP + H(+). It catalyses the reaction N-acetyl-alpha-neuraminosyl-(2-&gt;3)-beta-D-galactosyl-(1-&gt;3)-[N-acetyl-alpha-neuraminosyl-(2-&gt;6)]-N-acetyl-beta-D-glucosaminyl-(1-&gt;3)-beta-D-galactosyl-(1-&gt;4)-beta-D-glucosyl-(1&lt;-&gt;1')-N-acyl-sphing-4-enine + GDP-beta-L-fucose = N-acetyl-alpha-neuraminosyl-(2-&gt;3)-beta-D-galactosyl-(1-&gt;3)-alpha-L-fucosyl-(1-&gt;4)-[N-acetyl-alpha-neuraminosyl-(2-&gt;6)-N-acetyl-beta-D-glucosaminyl-(1-&gt;3)]-beta-D-galactosyl-(1-&gt;4)-beta-D-glucosyl-(1&lt;-&gt;1')-N-acyl-sphing-4-enine + GDP + H(+). The enzyme catalyses N-acetyl-alpha-neuraminosyl-(2-&gt;3)-beta-D-galactosyl-(1-&gt;3)-N-acetyl-beta-D-glucosaminyl-(1-&gt;3)-beta-D-galactosyl-(1-&gt;4)-beta-D-glucosyl-(1&lt;-&gt;1')-N-acyl-sphing-4-enine + GDP-beta-L-fucose = N-acetyl-alpha-neuraminosyl-(2-&gt;3)-beta-D-galactosyl-(1-&gt;3)-alpha-L-fucosyl-(1-&gt;4)-[N-acetyl-beta-D-glucosaminyl-(1-&gt;3)]-beta-D-galactosyl-(1-&gt;4)-beta-D-glucosyl-(1&lt;-&gt;1')-N-acyl-sphing-4-enine + GDP + H(+). The catalysed reaction is beta-D-galactosyl-(1-&gt;3)-N-acetyl-D-glucosamine + GDP-beta-L-fucose = beta-D-galactosyl-(1-&gt;3)-[alpha-L-fucosyl-(1-&gt;4)]-N-acetyl-D-glucosamine + GDP + H(+). It carries out the reaction alpha-L-Fuc-(1-&gt;2)-beta-D-Gal-(1-&gt;3)-D-GlcNAc + GDP-beta-L-fucose = alpha-L-Fuc-(1-&gt;2)-beta-D-Gal-(1-&gt;3)-[alpha-L-Fuc-(1-&gt;4)]-D-GlcNAc + GDP + H(+). It catalyses the reaction alpha-L-Fuc-(1-&gt;2)-beta-D-Gal-(1-&gt;4)-D-GlcNAc + GDP-beta-L-fucose = alpha-L-Fuc-(1-&gt;2)-beta-D-Gal-(1-&gt;4)-[alpha-L-Fuc-(1-&gt;3)]-D-GlcNAc + GDP + H(+). The enzyme catalyses beta-D-galactosyl-(1-&gt;4)-N-acetyl-D-glucosamine + GDP-beta-L-fucose = beta-D-galactosyl-(1-&gt;4)-[alpha-L-fucosyl-(1-&gt;3)]-N-acetyl-D-glucosamine + GDP + H(+). The catalysed reaction is lactose + GDP-beta-L-fucose = beta-D-galactosyl-(1-&gt;4)-[alpha-L-fucosyl-(1-&gt;3)]-D-glucose + GDP + H(+). It carries out the reaction an alpha-Neu5Ac-(2-&gt;3)-beta-D-Gal-(1-&gt;3)-D-GlcNAc derivative + GDP-beta-L-fucose = an alpha-Neu5Ac-(2-&gt;3)-beta-D-Gal-(1-&gt;3)-[alpha-L-Fuc-(1-&gt;4)]-beta-D-GlcNAc derivative + GDP + H(+). It participates in protein modification; protein glycosylation. Catalyzes the transfer of L-fucose, from a guanosine diphosphate-beta-L-fucose, to both the subterminal N-acetyl glucosamine (GlcNAc) of type 1 chain (beta-D-Gal-(1-&gt;3)-beta-D-GlcNAc) glycolipids and oligosaccharides via an alpha(1,4) linkage, and the subterminal glucose (Glc) or GlcNAc of type 2 chain (beta-D-Gal-(1-&gt;4)-beta-D-GlcNAc) oligosaccharides via an alpha(1,3) linkage, independently of the presence of terminal alpha-L-fucosyl-(1,2) moieties on the terminal galactose of these acceptors and participates in the blood groups Lewis determination and expression of Lewis a (Le(a)), lewis b (Le(b)), Lewis x/SSEA-1 (Le(x)) and lewis y (Le(y)) antigens. Also catalyzes the transfer of L-fucose to subterminal GlcNAc of sialyl- and disialyl-lactotetraosylceramide to produce sialyl Lewis a (sLe(a)) and disialyl Lewis a via an alpha(1,4) linkage and therefore may regulate cell surface sialyl Lewis a expression and consequently regulates adhesive properties to E-selectin, cell proliferation and migration. Catalyzes the transfer of an L-fucose to 3'-sialyl-N-acetyllactosamine by an alpha(1,3) linkage, which allows the formation of sialyl-Lewis x structure and therefore may regulate the sialyl-Lewis x surface antigen expression and consequently adhesive properties to E-selectin. Prefers type 1 chain over type 2 acceptors. Type 1 tetrasaccharide is a better acceptor than type 1 disaccharide suggesting that a beta anomeric configuration of GlcNAc in the substrate is preferred. Lewis-positive (Le(+)) individuals have an active enzyme while Lewis-negative (Le(-)) individuals have an inactive enzyme. This Pan troglodytes (Chimpanzee) protein is 3-galactosyl-N-acetylglucosaminide 4-alpha-L-fucosyltransferase FUT3.